The following is a 131-amino-acid chain: MKTNCEFPLLCLLIVLVANVEGEVEDNELKMVKRLWRNWEDPEQRQLLDQEAEQEKQREKRLWRNWEDLELRQLLNEFAENQREKRLWRNWERRQVANEDDGEKPKELWRNWEDLKRRQVVDLNDEQKTTG.

The first 22 residues, 1–22 (MKTNCEFPLLCLLIVLVANVEG), serve as a signal peptide directing secretion. Residues 23-94 (EVEDNELKMV…KRLWRNWERR (72 aa)) constitute a propeptide that is removed on maturation. RLWRNWE repeat units lie at residues 34-40 (RLWRNWE), 61-67 (RLWRNWE), and 86-92 (RLWRNWE). At Gln95 the chain carries Pyrrolidone carboxylic acid. An RLWRNWE 4; approximate repeat occupies 107–113 (ELWRNWE). Positions 112 to 131 (WEDLKRRQVVDLNDEQKTTG) are excised as a propeptide.

It belongs to the scoloptoxin-08 family. Expressed by the venom gland.

It localises to the secreted. This is U-scoloptoxin-Er5e from Ethmostigmus rubripes (Giant centipede).